Here is a 138-residue protein sequence, read N- to C-terminus: Large ribosomal subunit protein uL16 (138 aa).

The protein belongs to the universal ribosomal protein uL16 family. As to quaternary structure, part of the 50S ribosomal subunit.

Functionally, binds 23S rRNA and is also seen to make contacts with the A and possibly P site tRNAs. This is Large ribosomal subunit protein uL16 from Ureaplasma urealyticum serovar 10 (strain ATCC 33699 / Western).